The sequence spans 386 residues: Galactokinase (386 aa).

35 to 38 (EHTD) contacts substrate. ATP contacts are provided by residues Ser-69 and 125–131 (GAGLSSS). Residues Ser-131 and Glu-163 each contribute to the Mg(2+) site. Residue Asp-175 is the Proton acceptor of the active site. Tyr-224 contributes to the substrate binding site.

Belongs to the GHMP kinase family. GalK subfamily.

The protein resides in the cytoplasm. The catalysed reaction is alpha-D-galactose + ATP = alpha-D-galactose 1-phosphate + ADP + H(+). Its pathway is carbohydrate metabolism; galactose metabolism. Functionally, catalyzes the transfer of the gamma-phosphate of ATP to D-galactose to form alpha-D-galactose-1-phosphate (Gal-1-P). The chain is Galactokinase from Vibrio parahaemolyticus serotype O3:K6 (strain RIMD 2210633).